A 127-amino-acid chain; its full sequence is Glycine cleavage system H protein (127 aa).

One can recognise a Lipoyl-binding domain in the interval 22-104 (NVRIGITDYA…YDKAWMIVVK (83 aa)). Lysine 63 is subject to N6-lipoyllysine.

Belongs to the GcvH family. In terms of assembly, the glycine cleavage system is composed of four proteins: P, T, L and H. (R)-lipoate serves as cofactor.

The glycine cleavage system catalyzes the degradation of glycine. The H protein shuttles the methylamine group of glycine from the P protein to the T protein. Its function is as follows. Is also involved in protein lipoylation via its role as an octanoyl/lipoyl carrier protein intermediate. The chain is Glycine cleavage system H protein from Geobacillus kaustophilus (strain HTA426).